A 161-amino-acid polypeptide reads, in one-letter code: Putative 4-hydroxy-4-methyl-2-oxoglutarate aldolase (161 aa).

Substrate contacts are provided by residues 77–80 (GGNL) and Arg99. Asp100 serves as a coordination point for a divalent metal cation.

This sequence belongs to the class II aldolase/RraA-like family. Homotrimer. It depends on a divalent metal cation as a cofactor.

It catalyses the reaction 4-hydroxy-4-methyl-2-oxoglutarate = 2 pyruvate. It carries out the reaction oxaloacetate + H(+) = pyruvate + CO2. Catalyzes the aldol cleavage of 4-hydroxy-4-methyl-2-oxoglutarate (HMG) into 2 molecules of pyruvate. Also contains a secondary oxaloacetate (OAA) decarboxylase activity due to the common pyruvate enolate transition state formed following C-C bond cleavage in the retro-aldol and decarboxylation reactions. This Methylococcus capsulatus (strain ATCC 33009 / NCIMB 11132 / Bath) protein is Putative 4-hydroxy-4-methyl-2-oxoglutarate aldolase.